The primary structure comprises 612 residues: Cyclin-dependent kinase 8 (612 aa).

One can recognise a Protein kinase domain in the interval 23 to 345 (FENSKEIGRG…CEEAMNDIYF (323 aa)). ATP is bound by residues 29–37 (IGRGTYGLV) and K57. The active-site Proton acceptor is D155. 5 stretches are compositionally biased toward low complexity: residues 403–455 (QQQM…MGQP), 472–483 (HQMMQQQHQSQH), 543–555 (PQPG…QQRP), 564–573 (QGYMNPQMGM), and 600–612 (NPQQ…QYHR). Disordered stretches follow at residues 403-483 (QQQM…QSQH) and 543-612 (PQPG…QYHR).

This sequence belongs to the protein kinase superfamily. CMGC Ser/Thr protein kinase family. CDC2/CDKX subfamily. In terms of assembly, component of the Mediator complex. The cofactor is Mg(2+).

It is found in the nucleus. The catalysed reaction is L-seryl-[protein] + ATP = O-phospho-L-seryl-[protein] + ADP + H(+). The enzyme catalyses L-threonyl-[protein] + ATP = O-phospho-L-threonyl-[protein] + ADP + H(+). It carries out the reaction [DNA-directed RNA polymerase] + ATP = phospho-[DNA-directed RNA polymerase] + ADP + H(+). Component of the Mediator complex, a coactivator involved in regulated gene transcription of nearly all RNA polymerase II-dependent genes. Mediator functions as a bridge to convey information from gene-specific regulatory proteins to the basal RNA polymerase II transcription machinery. Mediator is recruited to promoters by direct interactions with regulatory proteins and serves as a scaffold for the assembly of a functional pre-initiation complex with RNA polymerase II and the general transcription factors. Phosphorylates the CTD (C-terminal domain) of the large subunit of RNA polymerase II (RNAp II), which may inhibit the formation of a transcription initiation complex. The chain is Cyclin-dependent kinase 8 (cdk-8) from Caenorhabditis briggsae.